The following is a 484-amino-acid chain: Aspartyl aminopeptidase (484 aa).

Methionine 1 carries the N-acetylmethionine modification. Histidine 84 provides a ligand contact to Zn(2+). Histidine 159 lines the substrate pocket. The segment covering 188–206 (PVESKSTTTTTTTESPKTS) has biased composition (low complexity). The tract at residues 188–213 (PVESKSTTTTTTTESPKTSDPQDVNS) is disordered. Position 266 (aspartate 266) interacts with Zn(2+). Position 301 (glutamate 301) interacts with substrate. Zn(2+) contacts are provided by glutamate 302 and aspartate 354. Substrate is bound by residues aspartate 354, histidine 357, lysine 382, and tyrosine 389. Histidine 448 is a binding site for Zn(2+).

Belongs to the peptidase M18 family. In terms of assembly, tetrahedron-shaped homododecamer built from six homodimers. Zn(2+) serves as cofactor.

It is found in the cytoplasm. It carries out the reaction Release of an N-terminal aspartate or glutamate from a peptide, with a preference for aspartate.. In terms of biological role, likely to play an important role in intracellular protein and peptide metabolism. This chain is Aspartyl aminopeptidase (dnpep), found in Dictyostelium discoideum (Social amoeba).